The primary structure comprises 608 residues: Isocitrate dehydrogenase kinase/phosphatase (608 aa).

ATP-binding positions include 328–334 (APGIKGL) and Lys-349. The active site involves Asp-384.

Belongs to the AceK family.

It is found in the cytoplasm. It catalyses the reaction L-seryl-[isocitrate dehydrogenase] + ATP = O-phospho-L-seryl-[isocitrate dehydrogenase] + ADP + H(+). Functionally, bifunctional enzyme which can phosphorylate or dephosphorylate isocitrate dehydrogenase (IDH) on a specific serine residue. This is a regulatory mechanism which enables bacteria to bypass the Krebs cycle via the glyoxylate shunt in response to the source of carbon. When bacteria are grown on glucose, IDH is fully active and unphosphorylated, but when grown on acetate or ethanol, the activity of IDH declines drastically concomitant with its phosphorylation. This is Isocitrate dehydrogenase kinase/phosphatase from Cupriavidus pinatubonensis (strain JMP 134 / LMG 1197) (Cupriavidus necator (strain JMP 134)).